Reading from the N-terminus, the 243-residue chain is Putative glycerophosphodiester phosphodiesterase YhdW (243 aa).

The GP-PDE domain maps to 1–238 (MYIIAHRGAS…DYPDFIIKDG (238 aa)). Residue His6 is the Proton acceptor of the active site. Ca(2+)-binding residues include Glu33 and Asp35. The Proton donor role is filled by His48. Ca(2+) is bound at residue Glu107.

Belongs to the glycerophosphoryl diester phosphodiesterase family. The cofactor is Ca(2+).

The catalysed reaction is a sn-glycero-3-phosphodiester + H2O = an alcohol + sn-glycerol 3-phosphate + H(+). Functionally, glycerophosphodiester phosphodiesterase hydrolyzes glycerophosphodiesters into glycerol-3-phosphate (G3P) and the corresponding alcohol. This is Putative glycerophosphodiester phosphodiesterase YhdW (yhdW) from Bacillus subtilis (strain 168).